The chain runs to 295 residues: Ventral anterior homeobox 1a (295 aa).

Basic and acidic residues predominate over residues Ile20–Gln33. Residues Ile20–Ser63 form a disordered region. The homeobox DNA-binding region spans Pro97–Gln156. Residues Arg203 to Pro226 form a disordered region. The span at Ala204–Pro222 shows a compositional bias: polar residues.

It belongs to the EMX homeobox family.

The protein resides in the nucleus. Its function is as follows. May play a role in the specification and maintenance of basal forebrain identity. The chain is Ventral anterior homeobox 1a (vax1-a) from Xenopus laevis (African clawed frog).